Here is a 323-residue protein sequence, read N- to C-terminus: Homocysteine S-methyltransferase 1 (323 aa).

Residues valine 3 to leucine 317 enclose the Hcy-binding domain. The Zn(2+) site is built by cysteine 235, cysteine 302, and cysteine 303.

Monomer. Requires Zn(2+) as cofactor.

The catalysed reaction is S-methyl-L-methionine + L-homocysteine = 2 L-methionine + H(+). In terms of biological role, catalyzes methyl transfer from S-methylmethionine (SMM) to adenosyl-L-homocysteine (AdoMet). SMM degradation (by HMT-1, HMT-2, HMT-3 and HMT-4) and biosynthesis (by MMT1) constitute the SMM cycle in plants, which is probably required to achieve short term control of AdoMet level. This is Homocysteine S-methyltransferase 1 (HMT-1) from Zea mays (Maize).